A 160-amino-acid chain; its full sequence is Sperm protein associated with the nucleus on the X chromosome N2 (160 aa).

Disordered stretches follow at residues 1–48 and 64–160; these read MEKP…TSEY and SNQL…GEED. A compositionally biased stretch (basic and acidic residues) spans 10–35; it reads GEKRKSPCDSNNRNDEMQETPNRDLA. Over residues 64 to 79 the composition is skewed to polar residues; sequence SNQLENDQSQENSVNP. The span at 81–97 shows a compositional bias: acidic residues; it reads QEEEDEGSSQEDEDLDS. Residues 136–148 show a composition bias toward basic and acidic residues; the sequence is SSERSSQEEKDPD.

It belongs to the SPAN-X family.

This Pongo pygmaeus (Bornean orangutan) protein is Sperm protein associated with the nucleus on the X chromosome N2 (SPANXN2).